The primary structure comprises 202 residues: Molybdenum cofactor guanylyltransferase (202 aa).

Residues 9–11 (LAG), Lys-22, Asp-70, and Asp-96 each bind GTP. Asp-96 serves as a coordination point for Mg(2+).

The protein belongs to the MobA family. In terms of assembly, monomer. Mg(2+) serves as cofactor.

The protein localises to the cytoplasm. It catalyses the reaction Mo-molybdopterin + GTP + H(+) = Mo-molybdopterin guanine dinucleotide + diphosphate. Its function is as follows. Transfers a GMP moiety from GTP to Mo-molybdopterin (Mo-MPT) cofactor (Moco or molybdenum cofactor) to form Mo-molybdopterin guanine dinucleotide (Mo-MGD) cofactor. The polypeptide is Molybdenum cofactor guanylyltransferase (Desulfosudis oleivorans (strain DSM 6200 / JCM 39069 / Hxd3) (Desulfococcus oleovorans)).